We begin with the raw amino-acid sequence, 203 residues long: ATP-dependent Clp protease proteolytic subunit 2 (203 aa).

Residue Ser98 is the Nucleophile of the active site. The active site involves His123.

This sequence belongs to the peptidase S14 family. As to quaternary structure, fourteen ClpP subunits assemble into 2 heptameric rings which stack back to back to give a disk-like structure with a central cavity, resembling the structure of eukaryotic proteasomes.

It is found in the cytoplasm. The catalysed reaction is Hydrolysis of proteins to small peptides in the presence of ATP and magnesium. alpha-casein is the usual test substrate. In the absence of ATP, only oligopeptides shorter than five residues are hydrolyzed (such as succinyl-Leu-Tyr-|-NHMec, and Leu-Tyr-Leu-|-Tyr-Trp, in which cleavage of the -Tyr-|-Leu- and -Tyr-|-Trp bonds also occurs).. In terms of biological role, cleaves peptides in various proteins in a process that requires ATP hydrolysis. Has a chymotrypsin-like activity. Plays a major role in the degradation of misfolded proteins. The sequence is that of ATP-dependent Clp protease proteolytic subunit 2 from Chlamydia pneumoniae (Chlamydophila pneumoniae).